We begin with the raw amino-acid sequence, 338 residues long: Nicotinate-nucleotide--dimethylbenzimidazole phosphoribosyltransferase (338 aa).

Glu305 functions as the Proton acceptor in the catalytic mechanism.

The protein belongs to the CobT family.

The catalysed reaction is 5,6-dimethylbenzimidazole + nicotinate beta-D-ribonucleotide = alpha-ribazole 5'-phosphate + nicotinate + H(+). The protein operates within nucleoside biosynthesis; alpha-ribazole biosynthesis; alpha-ribazole from 5,6-dimethylbenzimidazole: step 1/2. Its function is as follows. Catalyzes the synthesis of alpha-ribazole-5'-phosphate from nicotinate mononucleotide (NAMN) and 5,6-dimethylbenzimidazole (DMB). The polypeptide is Nicotinate-nucleotide--dimethylbenzimidazole phosphoribosyltransferase (Rhizobium etli (strain CIAT 652)).